We begin with the raw amino-acid sequence, 426 residues long: Serine--tRNA ligase (426 aa).

An L-serine-binding site is contributed by Thr233–Glu235. Arg264–Glu266 contributes to the ATP binding site. Glu287 is an L-serine binding site. Residue Glu351–Ser354 coordinates ATP. Ser387 contacts L-serine.

The protein belongs to the class-II aminoacyl-tRNA synthetase family. Type-1 seryl-tRNA synthetase subfamily. Homodimer. The tRNA molecule binds across the dimer.

It is found in the cytoplasm. It catalyses the reaction tRNA(Ser) + L-serine + ATP = L-seryl-tRNA(Ser) + AMP + diphosphate + H(+). The catalysed reaction is tRNA(Sec) + L-serine + ATP = L-seryl-tRNA(Sec) + AMP + diphosphate + H(+). The protein operates within aminoacyl-tRNA biosynthesis; selenocysteinyl-tRNA(Sec) biosynthesis; L-seryl-tRNA(Sec) from L-serine and tRNA(Sec): step 1/1. Functionally, catalyzes the attachment of serine to tRNA(Ser). Is also able to aminoacylate tRNA(Sec) with serine, to form the misacylated tRNA L-seryl-tRNA(Sec), which will be further converted into selenocysteinyl-tRNA(Sec). The polypeptide is Serine--tRNA ligase (Clostridium botulinum (strain Okra / Type B1)).